Here is a 185-residue protein sequence, read N- to C-terminus: Peptidyl-tRNA hydrolase (185 aa).

Y14 is a tRNA binding site. H19 (proton acceptor) is an active-site residue. Positions 65, 67, and 113 each coordinate tRNA.

The protein belongs to the PTH family. Monomer.

It localises to the cytoplasm. The catalysed reaction is an N-acyl-L-alpha-aminoacyl-tRNA + H2O = an N-acyl-L-amino acid + a tRNA + H(+). Hydrolyzes ribosome-free peptidyl-tRNAs (with 1 or more amino acids incorporated), which drop off the ribosome during protein synthesis, or as a result of ribosome stalling. In terms of biological role, catalyzes the release of premature peptidyl moieties from peptidyl-tRNA molecules trapped in stalled 50S ribosomal subunits, and thus maintains levels of free tRNAs and 50S ribosomes. The chain is Peptidyl-tRNA hydrolase from Rickettsia africae (strain ESF-5).